The following is a 150-amino-acid chain: MQLILLQKVTNLGNLGDLVDVKPGYGRNFLVPQGKAVPATESNKAEFEAKRADYEAKAQAIHADADARKAKLEGASVTIAANASTEGKLYGSVGAREIADAFTAAGLELNKSEVILGEGAFRNIGEYDVLVHLHADVETTVKVVVEAEKA.

This sequence belongs to the bacterial ribosomal protein bL9 family.

Functionally, binds to the 23S rRNA. This Stenotrophomonas maltophilia (strain R551-3) protein is Large ribosomal subunit protein bL9.